The chain runs to 177 residues: Ribosome rescue factor SmrB (177 aa).

Positions 98-173 constitute a Smr domain; the sequence is LDMHGMKQDE…GAGAILVLLS (76 aa).

The protein belongs to the SmrB family. Associates with collided ribosomes, but not with correctly translating polysomes.

Acts as a ribosome collision sensor. Detects stalled/collided disomes (pairs of ribosomes where the leading ribosome is stalled and a second ribosome has collided with it) and endonucleolytically cleaves mRNA at the 5' boundary of the stalled ribosome. Stalled/collided disomes form a new interface (primarily via the 30S subunits) that binds SmrB. Cleaved mRNA becomes available for tmRNA ligation, leading to ribosomal subunit dissociation and rescue of stalled ribosomes. This Aliivibrio fischeri (strain ATCC 700601 / ES114) (Vibrio fischeri) protein is Ribosome rescue factor SmrB.